The following is a 201-amino-acid chain: Potassium-transporting ATPase KdpC subunit (201 aa).

A helical membrane pass occupies residues 7–27 (PALVLLVALTAITGLAYPLAV).

This sequence belongs to the KdpC family. As to quaternary structure, the system is composed of three essential subunits: KdpA, KdpB and KdpC.

Its subcellular location is the cell inner membrane. Part of the high-affinity ATP-driven potassium transport (or Kdp) system, which catalyzes the hydrolysis of ATP coupled with the electrogenic transport of potassium into the cytoplasm. This subunit acts as a catalytic chaperone that increases the ATP-binding affinity of the ATP-hydrolyzing subunit KdpB by the formation of a transient KdpB/KdpC/ATP ternary complex. This chain is Potassium-transporting ATPase KdpC subunit, found in Methylorubrum extorquens (strain CM4 / NCIMB 13688) (Methylobacterium extorquens).